The sequence spans 405 residues: Phosphopentomutase (405 aa).

Asp10, Asp303, His308, Asp344, His345, and His356 together coordinate Mn(2+).

Belongs to the phosphopentomutase family. It depends on Mn(2+) as a cofactor.

Its subcellular location is the cytoplasm. It catalyses the reaction 2-deoxy-alpha-D-ribose 1-phosphate = 2-deoxy-D-ribose 5-phosphate. It carries out the reaction alpha-D-ribose 1-phosphate = D-ribose 5-phosphate. It participates in carbohydrate degradation; 2-deoxy-D-ribose 1-phosphate degradation; D-glyceraldehyde 3-phosphate and acetaldehyde from 2-deoxy-alpha-D-ribose 1-phosphate: step 1/2. Isomerase that catalyzes the conversion of deoxy-ribose 1-phosphate (dRib-1-P) and ribose 1-phosphate (Rib-1-P) to deoxy-ribose 5-phosphate (dRib-5-P) and ribose 5-phosphate (Rib-5-P), respectively. This is Phosphopentomutase from Shewanella sediminis (strain HAW-EB3).